The following is a 372-amino-acid chain: Glutamate 5-kinase (372 aa).

Lys14 serves as a coordination point for ATP. 3 residues coordinate substrate: Ser54, Asp141, and Asn153. ATP-binding positions include 173–174 (TD) and 215–221 (SGGMLTK). Residues 280–358 (AGKVVVDEGA…HEIEHILGYI (79 aa)) enclose the PUA domain.

Belongs to the glutamate 5-kinase family.

The protein localises to the cytoplasm. The enzyme catalyses L-glutamate + ATP = L-glutamyl 5-phosphate + ADP. The protein operates within amino-acid biosynthesis; L-proline biosynthesis; L-glutamate 5-semialdehyde from L-glutamate: step 1/2. Functionally, catalyzes the transfer of a phosphate group to glutamate to form L-glutamate 5-phosphate. The polypeptide is Glutamate 5-kinase (Methylobacillus flagellatus (strain ATCC 51484 / DSM 6875 / VKM B-1610 / KT)).